A 616-amino-acid polypeptide reads, in one-letter code: Dihydroxy-acid dehydratase (616 aa).

A Mg(2+)-binding site is contributed by Asp81. [2Fe-2S] cluster is bound at residue Cys122. Asp123 and Lys124 together coordinate Mg(2+). An N6-carboxylysine modification is found at Lys124. Cys195 contacts [2Fe-2S] cluster. Glu491 lines the Mg(2+) pocket. Residue Ser517 is the Proton acceptor of the active site.

The protein belongs to the IlvD/Edd family. As to quaternary structure, homodimer. [2Fe-2S] cluster is required as a cofactor. It depends on Mg(2+) as a cofactor.

It carries out the reaction (2R)-2,3-dihydroxy-3-methylbutanoate = 3-methyl-2-oxobutanoate + H2O. It catalyses the reaction (2R,3R)-2,3-dihydroxy-3-methylpentanoate = (S)-3-methyl-2-oxopentanoate + H2O. The protein operates within amino-acid biosynthesis; L-isoleucine biosynthesis; L-isoleucine from 2-oxobutanoate: step 3/4. It functions in the pathway amino-acid biosynthesis; L-valine biosynthesis; L-valine from pyruvate: step 3/4. Functions in the biosynthesis of branched-chain amino acids. Catalyzes the dehydration of (2R,3R)-2,3-dihydroxy-3-methylpentanoate (2,3-dihydroxy-3-methylvalerate) into 2-oxo-3-methylpentanoate (2-oxo-3-methylvalerate) and of (2R)-2,3-dihydroxy-3-methylbutanoate (2,3-dihydroxyisovalerate) into 2-oxo-3-methylbutanoate (2-oxoisovalerate), the penultimate precursor to L-isoleucine and L-valine, respectively. This chain is Dihydroxy-acid dehydratase, found in Klebsiella pneumoniae (strain 342).